Reading from the N-terminus, the 105-residue chain is MTLGRDAMTPLTILSVSETIYHNLLTSMVQDIVSRTTSRQQLQDARYPGLAPLHHDQRGALDVYGRPKPQEASVYFRCPNCSRDLSANRFAAHLERCMSRGARRG.

The SGF11-type zinc-finger motif lies at F76–C97.

It belongs to the SGF11 family. Component of the 1.8 MDa SAGA transcription coactivator-HAT complex. SAGA is built of 5 distinct domains with specialized functions. Within the SAGA complex, SUS1, SGF11, SGF73 and UBP8 form an additional subcomplex of SAGA called the DUB module (deubiquitination module). Interacts directly with SGF73, SUS1 and UBP8.

The protein resides in the nucleus. Its function is as follows. Functions as a component of the transcription regulatory histone acetylation (HAT) complex SAGA. At the promoters, SAGA is required for recruitment of the basal transcription machinery. It influences RNA polymerase II transcriptional activity through different activities such as TBP interaction and promoter selectivity, interaction with transcription activators, and chromatin modification through histone acetylation and deubiquitination. SAGA acetylates nucleosomal histone H3 to some extent (to form H3K9ac, H3K14ac, H3K18ac and H3K23ac). SAGA interacts with DNA via upstream activating sequences (UASs). Involved in transcriptional regulation of a subset of SAGA-regulated genes. Within the SAGA complex, participates in a subcomplex, that specifically deubiquitinates histones H2B. This Eremothecium gossypii (strain ATCC 10895 / CBS 109.51 / FGSC 9923 / NRRL Y-1056) (Yeast) protein is SAGA-associated factor 11.